We begin with the raw amino-acid sequence, 362 residues long: Beta-ketoacyl-[acyl-carrier-protein] synthase III 2 (362 aa).

Residues C113 and H251 contribute to the active site. Positions 252 to 256 (QANIR) are ACP-binding. Residue N281 is part of the active site.

The protein belongs to the thiolase-like superfamily. FabH family. As to quaternary structure, homodimer.

It localises to the cytoplasm. It catalyses the reaction malonyl-[ACP] + acetyl-CoA + H(+) = 3-oxobutanoyl-[ACP] + CO2 + CoA. Its pathway is lipid metabolism; fatty acid biosynthesis. Its function is as follows. Catalyzes the condensation reaction of fatty acid synthesis by the addition to an acyl acceptor of two carbons from malonyl-ACP. Catalyzes the first condensation reaction which initiates fatty acid synthesis and may therefore play a role in governing the total rate of fatty acid production. Possesses both acetoacetyl-ACP synthase and acetyl transacylase activities. Its substrate specificity determines the biosynthesis of branched-chain and/or straight-chain of fatty acids. This is Beta-ketoacyl-[acyl-carrier-protein] synthase III 2 from Vibrio cholerae serotype O1 (strain ATCC 39315 / El Tor Inaba N16961).